The following is a 125-amino-acid chain: Glycine cleavage system H protein (125 aa).

In terms of domain architecture, Lipoyl-binding spans 22–104; it reads SYVIGITDFA…YDTGWILKLE (83 aa). Residue lysine 63 is modified to N6-lipoyllysine.

The protein belongs to the GcvH family. As to quaternary structure, the glycine cleavage system is composed of four proteins: P, T, L and H. It depends on (R)-lipoate as a cofactor.

Its function is as follows. The glycine cleavage system catalyzes the degradation of glycine. The H protein shuttles the methylamine group of glycine from the P protein to the T protein. Is also involved in protein lipoylation via its role as an octanoyl/lipoyl carrier protein intermediate. The chain is Glycine cleavage system H protein from Listeria monocytogenes serotype 4a (strain HCC23).